A 436-amino-acid chain; its full sequence is Trigger factor (436 aa).

One can recognise a PPIase FKBP-type domain in the interval 161–246 (DDQLNIDFVG…VNSVAEPKLP (86 aa)).

It belongs to the FKBP-type PPIase family. Tig subfamily.

It localises to the cytoplasm. The catalysed reaction is [protein]-peptidylproline (omega=180) = [protein]-peptidylproline (omega=0). Its function is as follows. Involved in protein export. Acts as a chaperone by maintaining the newly synthesized protein in an open conformation. Functions as a peptidyl-prolyl cis-trans isomerase. The protein is Trigger factor of Pseudomonas paraeruginosa (strain DSM 24068 / PA7) (Pseudomonas aeruginosa (strain PA7)).